The following is a 186-amino-acid chain: Ribosome-recycling factor (186 aa).

The protein belongs to the RRF family.

It is found in the cytoplasm. Its function is as follows. Responsible for the release of ribosomes from messenger RNA at the termination of protein biosynthesis. May increase the efficiency of translation by recycling ribosomes from one round of translation to another. The chain is Ribosome-recycling factor from Ralstonia nicotianae (strain ATCC BAA-1114 / GMI1000) (Ralstonia solanacearum).